A 354-amino-acid polypeptide reads, in one-letter code: MGCAQSAEERAAAARSRLIERNLKEDGIQAAKDIKLLLLGAGESGKSTIVKQMKIIHESGFTAEDFKQYRPVVYSNTIQSLVAILRAMPTLSIQYSNNERESDAKMVFDVCQRMHDTEPFSEELLAAMKRLWQDAGVQECFSRSNEYQLNDSAKYFLDDLDRLGAKDYQPTEQDILRTRVKTTGIVEVHFSFKNLNFKLFDVGGQRSERKKWIHCFEDVTAIIFCVAMSEYDQVLHEDETTNRMQESLKLFDSICNNKWFTDTSIILFLNKKDLFEEKIRKSPLTICFPEYTGGQEYGEAAAYIQAQFEAKNKSTSKEIYCHMTCATDTNNIQFVFDAVTDVIIANNLRGCGLY.

Glycine 2 carries the N-myristoyl glycine lipid modification. Cysteine 3 is lipidated: S-palmitoyl cysteine. In terms of domain architecture, G-alpha spans 32–354 (KDIKLLLLGA…ANNLRGCGLY (323 aa)). The tract at residues 35-48 (KLLLLGAGESGKST) is G1 motif. GTP is bound by residues 40-47 (GAGESGKS), 176-182 (LRTRVKT), 201-205 (DVGGQ), 270-273 (NKKD), and alanine 326. Positions 47 and 182 each coordinate Mg(2+). The interval 174–182 (DILRTRVKT) is G2 motif. A G3 motif region spans residues 197 to 206 (FKLFDVGGQR). Residues 266-273 (ILFLNKKD) form a G4 motif region. The segment at 324–329 (TCATDT) is G5 motif.

This sequence belongs to the G-alpha family. G(i/o/t/z) subfamily. In terms of assembly, g proteins are composed of 3 units; alpha, beta and gamma. The alpha chain contains the guanine nucleotide binding site. In terms of tissue distribution, expressed primarily in neuronal cell bodies in the brain, optic lobe, and thoracic and abdominal ganglia. Also expressed in antenna, oocytes and ovarian nurse cells.

Functionally, guanine nucleotide-binding proteins (G proteins) are involved as modulators or transducers in various transmembrane signaling systems. Plays a role in glial cell differentiation during embryogenesis; loco, Galphai and the G-protein coupled receptor, moody, are required in the surface glia to achieve effective insulation of the nerve cord. The chain is G protein alpha o subunit (Galphao) from Drosophila melanogaster (Fruit fly).